The primary structure comprises 1165 residues: Autophagy-related protein 11 (1165 aa).

Coiled coils occupy residues 239–304 (NKLN…YKNM) and 670–853 (DNIR…KQKK).

The protein belongs to the ATG11 family. In terms of assembly, homodimer and potential homooligomers.

It localises to the preautophagosomal structure membrane. Plays an essential role in both non-selective and selective autophagy such as mitophagy. Recruits mitochondria for their selective degradation via autophagy (mitophagy) during starvation, through its interaction with ATG32. Works as scaffold proteins that recruit ATG proteins to the pre-autophagosome (PAS), the site of vesicle/autophagosome formation. Required for ATG9 anterograde transport from the mitochondria to the PAS. The polypeptide is Autophagy-related protein 11 (Candida albicans (strain SC5314 / ATCC MYA-2876) (Yeast)).